The following is a 332-amino-acid chain: DNA-directed RNA polymerase subunit alpha (332 aa).

The tract at residues 1 to 244 (MKKHAKVYYS…AHLNLLADVE (244 aa)) is alpha N-terminal domain (alpha-NTD). Residues 259–332 (IKEEPIRRFS…NYKNENKGEN (74 aa)) form an alpha C-terminal domain (alpha-CTD) region.

This sequence belongs to the RNA polymerase alpha chain family. In terms of assembly, homodimer. The RNAP catalytic core consists of 2 alpha, 1 beta, 1 beta' and 1 omega subunit. When a sigma factor is associated with the core the holoenzyme is formed, which can initiate transcription.

The catalysed reaction is RNA(n) + a ribonucleoside 5'-triphosphate = RNA(n+1) + diphosphate. Functionally, DNA-dependent RNA polymerase catalyzes the transcription of DNA into RNA using the four ribonucleoside triphosphates as substrates. The polypeptide is DNA-directed RNA polymerase subunit alpha (Mesomycoplasma hyopneumoniae (strain 7448) (Mycoplasma hyopneumoniae)).